Consider the following 291-residue polypeptide: MLGRRSVSLLRGLTELPVSSRAHTALRALSVPQTRRNVATKPNYEGHIPLNWFENALLTAGAAYMSITDPRRGDMVAALGETTAGPTVSWLRDQMLASPEGRQILKDRPRITSSTVDMDKLAQMPEGTFGRAYINWLERCGVTPDTREPVHYIDDPELAYVMQRYRECHDFYHCICNMPVNVESELAVKYFEFANLGLPMAGLAALFGPLRLNAQKRNWLFTEAVPWALKCGSSARSLITVYWEKRWEEQVEDMKKEFGIWDGPEARWSKPLNEAKEAAERRSKTTQNQIY.

The transit peptide at 1–37 directs the protein to the mitochondrion; that stretch reads MLGRRSVSLLRGLTELPVSSRAHTALRALSVPQTRRN. Zn(2+) is bound by residues His169, Asp170, His173, and Glu185. Over residues 271 to 283 the composition is skewed to basic and acidic residues; sequence PLNEAKEAAERRS. The tract at residues 271–291 is disordered; the sequence is PLNEAKEAAERRSKTTQNQIY.

This sequence belongs to the COQ4 family. In terms of assembly, component of a multi-subunit COQ enzyme complex, composed of at least COQ3, COQ4, COQ5, COQ6, COQ7 and COQ9. Zn(2+) serves as cofactor.

The protein localises to the mitochondrion inner membrane. The enzyme catalyses a 4-hydroxy-3-methoxy-5-(all-trans-polyprenyl)benzoate + H(+) = a 2-methoxy-6-(all-trans-polyprenyl)phenol + CO2. It functions in the pathway cofactor biosynthesis; ubiquinone biosynthesis. In terms of biological role, lyase that catalyzes the C1-decarboxylation of 4-hydroxy-3-methoxy-5-(all-trans-polyprenyl)benzoic acid into 2-methoxy-6-(all-trans-polyprenyl)phenol during ubiquinone biosynthesis. This chain is Ubiquinone biosynthesis protein COQ4, mitochondrial, found in Coprinopsis cinerea (strain Okayama-7 / 130 / ATCC MYA-4618 / FGSC 9003) (Inky cap fungus).